Consider the following 224-residue polypeptide: Virulence transcriptional regulatory protein PhoP (224 aa).

Positions 3–117 constitute a Response regulatory domain; sequence RVLVVEDNAL…EVMARMQALM (115 aa). Position 52 is a 4-aspartylphosphate (Asp-52). The ompR/PhoB-type DNA-binding region spans 125–223; it reads SQVINIPPFQ…VRGQGYLFEL (99 aa).

Post-translationally, phosphorylated by PhoQ.

The protein localises to the cytoplasm. Member of the two-component regulatory system PhoQ/PhoP which regulates the expression of genes involved in virulence and resistance to host defense antimicrobial peptides. This Salmonella choleraesuis (strain SC-B67) protein is Virulence transcriptional regulatory protein PhoP (phoP).